Here is a 426-residue protein sequence, read N- to C-terminus: DNA primase DnaG (426 aa).

In terms of domain architecture, Toprim spans 171 to 245 (DTVILVEGRA…KVDFVARAPP (75 aa)). Mg(2+)-binding residues include Glu-177, Asp-219, and Asp-221. The interval 407 to 426 (KSEENIQESVSTGESAQTSP) is disordered. A compositionally biased stretch (polar residues) spans 413–426 (QESVSTGESAQTSP).

The protein belongs to the archaeal DnaG primase family. In terms of assembly, forms a ternary complex with MCM helicase and DNA. Component of the archaeal exosome complex. It depends on Mg(2+) as a cofactor.

The enzyme catalyses ssDNA + n NTP = ssDNA/pppN(pN)n-1 hybrid + (n-1) diphosphate.. Its function is as follows. RNA polymerase that catalyzes the synthesis of short RNA molecules used as primers for DNA polymerase during DNA replication. Also part of the exosome, which is a complex involved in RNA degradation. Acts as a poly(A)-binding protein that enhances the interaction between heteromeric, adenine-rich transcripts and the exosome. The protein is DNA primase DnaG of Thermofilum pendens (strain DSM 2475 / Hrk 5).